Reading from the N-terminus, the 230-residue chain is 2,3-bisphosphoglycerate-dependent phosphoglycerate mutase (230 aa).

Residues 8–15 (RHGESEWN), 21–22 (TG), Arg-60, 87–90 (ERHY), Lys-98, 114–115 (RR), and 183–184 (GN) each bind substrate. His-9 acts as the Tele-phosphohistidine intermediate in catalysis. The active-site Proton donor/acceptor is the Glu-87.

It belongs to the phosphoglycerate mutase family. BPG-dependent PGAM subfamily.

The catalysed reaction is (2R)-2-phosphoglycerate = (2R)-3-phosphoglycerate. Its pathway is carbohydrate degradation; glycolysis; pyruvate from D-glyceraldehyde 3-phosphate: step 3/5. Functionally, catalyzes the interconversion of 2-phosphoglycerate and 3-phosphoglycerate. This is 2,3-bisphosphoglycerate-dependent phosphoglycerate mutase from Streptococcus thermophilus (strain CNRZ 1066).